A 137-amino-acid chain; its full sequence is Large ribosomal subunit protein uL13 (137 aa).

Arginine 55 bears the Citrulline mark. Residue serine 73 is modified to Phosphoserine. Position 136 is a citrulline (arginine 136).

The protein belongs to the universal ribosomal protein uL13 family. In terms of assembly, component of the 60S ribosome. Component of the GAIT complex. Interacts with EIF4G1. In terms of processing, phosphorylation at Ser-73 upon interferon-gamma treatment in macrophages involves a DAPK1-DAPK3 kinase cascade and is causing release from the ribosome, association with the GAIT complex and subsequent involvement in transcript-selective translation inhibition. Post-translationally, citrullinated by PADI4.

The protein localises to the cytoplasm. Its function is as follows. Associated with ribosomes but is not required for canonical ribosome function and has extra-ribosomal functions. Component of the GAIT (gamma interferon-activated inhibitor of translation) complex which mediates interferon-gamma-induced transcript-selective translation inhibition in inflammation processes. Upon interferon-gamma activation and subsequent phosphorylation dissociates from the ribosome and assembles into the GAIT complex which binds to stem loop-containing GAIT elements in the 3'-UTR of diverse inflammatory mRNAs (such as ceruplasmin) and suppresses their translation. In the GAIT complex interacts with m7G cap-bound eIF4G at or near the eIF3-binding site and blocks the recruitment of the 43S ribosomal complex. Involved in methylation of rRNA. This chain is Large ribosomal subunit protein uL13 (RPL13A), found in Sus scrofa (Pig).